A 90-amino-acid chain; its full sequence is MSRHVTVVLLLAVVLLLSSHMSHGQHWSYGLWPGGKREVEGLQESYSEVPNEVSFTDPQHFERSIPQNRISLVREALMNWLEGENTRKKI.

A signal peptide spans 1 to 24 (MSRHVTVVLLLAVVLLLSSHMSHG). Position 25 is a pyrrolidone carboxylic acid (Gln-25). Gly-34 bears the Glycine amide mark.

It belongs to the GnRH family. In terms of tissue distribution, expressed in forebrain but not in testis, ovary, kidney and liver.

Its subcellular location is the secreted. Its function is as follows. Stimulates the secretion of gonadotropins. This is Trp-8 progonadoliberin from Rana dybowskii (Dybovsky's frog).